We begin with the raw amino-acid sequence, 65 residues long: Large ribosomal subunit protein bL35 (65 aa).

The tract at residues 1-25 is disordered; sequence MPKMKSHRGAAKRFKKTGTGKLKRA.

It belongs to the bacterial ribosomal protein bL35 family.

The sequence is that of Large ribosomal subunit protein bL35 from Clostridium botulinum (strain Eklund 17B / Type B).